The sequence spans 541 residues: MADSPLEQGWNVVTWALSGSYDEDRPVLIDADQPNRSLSKKQAIDLVARLSGSFQPGSTVCVHLYNDIIYPVLVLAILASHCEWTGTNPAYTSAELSHHFAQSETRYVITDQAYVDVVHQAITASGQNIEIIIFSDIVTDKPGENDLRWRCNKYDLATLHSLLTHGDESTLRRRLQGIPNHSPATAMSTSGTTGLPKMVQRSHRSLVLETGGTQDHNSAKPFQVRRLYCTPIFHAFSFPEMVINTIRLGFPSFYMRRFDESFANKVHEFGITETMAAPAMLLKIIQWTEKHEEQRFKLQGLRTILCAGAALASRLRASFLQLFDDASVRIVQVWGMTEGGWFATFWYPEHDDTGSIGRPLPTCQIRVSEVPHAELPDGRQVGELLVKGPQLLTTYKGHPDATKQAFNDGWLRTGDIGYCANGKVYIIDRAKDIIKVNGWTISPAELEAVLHQMPVIVDAAALSYGTGTKEHVAMFVVAKEPSMLIADIKHHLLQQVARFKVATCEIHLVDSLPRNSSGKILRGVLRHQLQAHYGNGDHGID.

Ala-186–Lys-197 lines the AMP pocket. Residues Glu-445–Lys-519 form an AMP-binding region.

The protein belongs to the ATP-dependent AMP-binding enzyme family.

Its pathway is secondary metabolite biosynthesis. Its function is as follows. Acyl-CoA ligase; part of the gene cluster that mediates the biosynthesis of squalestatin S1 (SQS1, also known as zaragozic acid A), a heavily oxidized fungal polyketide that offers potent cholesterol lowering activity by targeting squalene synthase (SS). SQS1 is composed of a 2,8-dioxobicyclic[3.2.1]octane-3,4,5-tricarboxyclic acid core that is connected to two lipophilic polyketide arms. These initial steps feature the priming of an unusual benzoic acid starter unit onto the highly reducing polyketide synthase pks2, followed by oxaloacetate extension and product release to generate a tricarboxylic acid containing product. The phenylalanine ammonia lyase (PAL) M7 and the acyl-CoA ligase M9 are involved in transforming phenylalanine into benzoyl-CoA. The citrate synthase-like protein R3 is involved in connecting the C-alpha-carbons of the hexaketide chain and oxaloacetate to afford the tricarboxylic acid unit. The potential hydrolytic enzymes, M8 and M10, are in close proximity to pks2 and may participate in product release. On the other side, the tetraketide arm is synthesized by a the squalestatin tetraketide synthase pks1 and enzymatically esterified to the core in the last biosynthetic step, by the acetyltransferase M4. The biosynthesis of the tetraketide must involve 3 rounds of chain extension. After the first and second rounds methyl-transfer occurs, and in all rounds of extension the ketoreductase and dehydratase are active. The enoyl reductase and C-MeT of pks1 are not active in the final round of extension. The acetyltransferase M4 appears to have a broad substrate selectivity for its acyl CoA substrate, allowing the in vitro synthesis of novel squalestatins. The biosynthesis of SQS1 requires several oxidative steps likely performed by oxidoreductases M1, R1 and R2. Finally, in support of the identification of the cluster as being responsible for SQS1 production, the cluster contains a gene encoding a putative squalene synthase (SS) R6, suggesting a likely mechanism for self-resistance. The sequence is that of Acyl-CoA ligase M9 from Phoma sp. (strain ATCC 20986 / MF5453).